A 185-amino-acid polypeptide reads, in one-letter code: Ribosome-recycling factor (185 aa).

This sequence belongs to the RRF family.

It localises to the cytoplasm. Functionally, responsible for the release of ribosomes from messenger RNA at the termination of protein biosynthesis. May increase the efficiency of translation by recycling ribosomes from one round of translation to another. This Bacillus mycoides (strain KBAB4) (Bacillus weihenstephanensis) protein is Ribosome-recycling factor.